Reading from the N-terminus, the 381-residue chain is Alkanesulfonate monooxygenase (381 aa).

This sequence belongs to the SsuD family. Homotetramer.

It carries out the reaction an alkanesulfonate + FMNH2 + O2 = an aldehyde + FMN + sulfite + H2O + 2 H(+). Catalyzes the desulfonation of aliphatic sulfonates. In Escherichia coli O127:H6 (strain E2348/69 / EPEC), this protein is Alkanesulfonate monooxygenase.